Reading from the N-terminus, the 688-residue chain is PTS system glucoside-specific EIICBA component (688 aa).

Residues Lys-3 to Asp-427 enclose the PTS EIIC type-1 domain. Helical transmembrane passes span Ile-12–Phe-32, Leu-81–Met-101, Leu-137–Leu-157, Phe-182–Trp-202, Leu-223–Ile-243, Ala-284–Ile-304, Val-315–Pro-335, Phe-340–Leu-360, Leu-364–Gly-384, and Leu-395–Ile-415. One can recognise a PTS EIIB type-1 domain in the interval Ala-438–Lys-519. Catalysis depends on Cys-460, which acts as the Phosphocysteine intermediate; for EIIB activity. One can recognise a PTS EIIA type-1 domain in the interval Asp-560 to Asn-664. The Tele-phosphohistidine intermediate; for EIIA activity role is filled by His-612.

Its subcellular location is the cell membrane. Its function is as follows. The phosphoenolpyruvate-dependent sugar phosphotransferase system (sugar PTS), a major carbohydrate active -transport system, catalyzes the phosphorylation of incoming sugar substrates concomitantly with their translocation across the cell membrane. This system is involved in alpha- and beta-glucoside transport. The sequence is that of PTS system glucoside-specific EIICBA component (glcB) from Staphylococcus aureus (strain JH1).